A 78-amino-acid polypeptide reads, in one-letter code: Translation initiation factor IF-1 (78 aa).

Residues 2-78 (SKNNLNETES…TRARITYRFK (77 aa)) form the S1-like domain.

The protein belongs to the IF-1 family. In terms of assembly, component of the 30S ribosomal translation pre-initiation complex which assembles on the 30S ribosome in the order IF-2 and IF-3, IF-1 and N-formylmethionyl-tRNA(fMet); mRNA recruitment can occur at any time during PIC assembly.

It is found in the cytoplasm. One of the essential components for the initiation of protein synthesis. Stabilizes the binding of IF-2 and IF-3 on the 30S subunit to which N-formylmethionyl-tRNA(fMet) subsequently binds. Helps modulate mRNA selection, yielding the 30S pre-initiation complex (PIC). Upon addition of the 50S ribosomal subunit IF-1, IF-2 and IF-3 are released leaving the mature 70S translation initiation complex. The sequence is that of Translation initiation factor IF-1 from Onion yellows phytoplasma (strain OY-M).